Reading from the N-terminus, the 328-residue chain is Fe(3+) ions import ATP-binding protein FbpC 1 (328 aa).

Residues 7–237 (LVLKNITKAF…PNSLFLANFM (231 aa)) enclose the ABC transporter domain. Position 39–46 (39–46 (GPSGCGKT)) interacts with ATP.

It belongs to the ABC transporter superfamily. Fe(3+) ion importer (TC 3.A.1.10) family. The complex is composed of two ATP-binding proteins (FbpC), two transmembrane proteins (FbpB) and a solute-binding protein (FbpA).

It is found in the cell inner membrane. The catalysed reaction is Fe(3+)(out) + ATP + H2O = Fe(3+)(in) + ADP + phosphate + H(+). Its function is as follows. Part of the ABC transporter complex FbpABC involved in Fe(3+) ions import. Responsible for energy coupling to the transport system. The polypeptide is Fe(3+) ions import ATP-binding protein FbpC 1 (Haemophilus influenzae (strain ATCC 51907 / DSM 11121 / KW20 / Rd)).